Reading from the N-terminus, the 88-residue chain is YcgL domain-containing protein CGSHiGG_01115 (88 aa).

The YcgL domain maps to 1–85 (MLCAIYKSKK…QDDGLFNSLS (85 aa)).

The chain is YcgL domain-containing protein CGSHiGG_01115 from Haemophilus influenzae (strain PittGG).